A 187-amino-acid polypeptide reads, in one-letter code: Putative glutathione-dependent formaldehyde-activating enzyme (187 aa).

The CENP-V/GFA domain maps to 20–166 (FPGGKLYCHC…FESVGLKTYD (147 aa)). The Zn(2+) site is built by Cys27, Cys29, Cys48, Cys50, Cys53, Cys95, and Cys98.

The protein belongs to the Gfa family. Zn(2+) serves as cofactor.

It carries out the reaction S-(hydroxymethyl)glutathione = glutathione + formaldehyde. It functions in the pathway one-carbon metabolism; formaldehyde degradation; formate from formaldehyde (glutathione route): step 1/3. In terms of biological role, catalyzes the condensation of formaldehyde and glutathione to S-hydroxymethylglutathione. This is Putative glutathione-dependent formaldehyde-activating enzyme from Talaromyces marneffei (strain ATCC 18224 / CBS 334.59 / QM 7333) (Penicillium marneffei).